A 482-amino-acid chain; its full sequence is Magnesium-dependent glutamate N-prenyltransferase (482 aa).

Mg(2+) contacts are provided by Asn351, Thr355, Glu359, and Phe366.

The protein belongs to the terpene synthase family. The cofactor is Mg(2+).

It carries out the reaction (2E)-geranyl diphosphate + L-glutamate = N-geranyl-L-glutamate + diphosphate. It functions in the pathway secondary metabolite biosynthesis. Functionally, magnesium-dependent glutamate N-prenyltransferase: part of the gene cluster that mediates the biosynthesis of domoic acid (DA) and derivatives, natural products with neurochemical activity acting as ionotropic glutamate receptor (iGluR) agonists, thus being neurotoxins causing amnesic shellfish poisoning (ASP). Catalyzes the conversion of L-glutamic acid (L-Glu) to N-geranyl-L-glutamic acid (NGG) in the presence of geranyl diphosphate (GPP). Also able to catalyze the formation of farnesyl-L-glutamate from farnesyl diphosphate (FPP). Cannot use dimethylallyl diphosphate (DMAPP) as substrate. The chain is Magnesium-dependent glutamate N-prenyltransferase from Pseudo-nitzschia multiseries (Marine planktonic diatom).